The sequence spans 278 residues: Large ribosomal subunit protein uL2 (278 aa).

Disordered regions lie at residues 1-58 (MGIR…GGGH) and 210-278 (GRMR…GKKR). Basic and acidic residues predominate over residues 23–33 (EVTRSEPEKSL). Residues 40-49 (SGGRNSTGRI) are compositionally biased toward low complexity. 2 stretches are compositionally biased toward basic residues: residues 210-220 (GRMRWKGKRPS) and 269-278 (VRRRRTGKKR).

The protein belongs to the universal ribosomal protein uL2 family. Part of the 50S ribosomal subunit. Forms a bridge to the 30S subunit in the 70S ribosome.

In terms of biological role, one of the primary rRNA binding proteins. Required for association of the 30S and 50S subunits to form the 70S ribosome, for tRNA binding and peptide bond formation. It has been suggested to have peptidyltransferase activity; this is somewhat controversial. Makes several contacts with the 16S rRNA in the 70S ribosome. In Beutenbergia cavernae (strain ATCC BAA-8 / DSM 12333 / CCUG 43141 / JCM 11478 / NBRC 16432 / NCIMB 13614 / HKI 0122), this protein is Large ribosomal subunit protein uL2.